Reading from the N-terminus, the 156-residue chain is Small ribosomal subunit protein uS7 (156 aa).

The protein belongs to the universal ribosomal protein uS7 family. As to quaternary structure, part of the 30S ribosomal subunit. Contacts proteins S9 and S11.

Functionally, one of the primary rRNA binding proteins, it binds directly to 16S rRNA where it nucleates assembly of the head domain of the 30S subunit. Is located at the subunit interface close to the decoding center, probably blocks exit of the E-site tRNA. The sequence is that of Small ribosomal subunit protein uS7 from Beijerinckia indica subsp. indica (strain ATCC 9039 / DSM 1715 / NCIMB 8712).